The sequence spans 55 residues: uncharacterized protein (55 aa).

2 helical membrane passes run Leu-5–Met-25 and Leu-26–Leu-46.

Its subcellular location is the cell membrane. This is an uncharacterized protein from Bacillus subtilis (strain 168).